The sequence spans 394 residues: 8-amino-7-oxononanoate synthase (394 aa).

R21 contributes to the substrate binding site. 112–113 contacts pyridoxal 5'-phosphate; it reads GY. H137 lines the substrate pocket. Residues S183, H211, and T239 each contribute to the pyridoxal 5'-phosphate site. Residue K242 is modified to N6-(pyridoxal phosphate)lysine. T358 contributes to the substrate binding site.

This sequence belongs to the class-II pyridoxal-phosphate-dependent aminotransferase family. BioF subfamily. Homodimer. The cofactor is pyridoxal 5'-phosphate.

It catalyses the reaction 6-carboxyhexanoyl-[ACP] + L-alanine + H(+) = (8S)-8-amino-7-oxononanoate + holo-[ACP] + CO2. It functions in the pathway cofactor biosynthesis; biotin biosynthesis. Functionally, catalyzes the decarboxylative condensation of pimeloyl-[acyl-carrier protein] and L-alanine to produce 8-amino-7-oxononanoate (AON), [acyl-carrier protein], and carbon dioxide. This chain is 8-amino-7-oxononanoate synthase, found in Paraburkholderia xenovorans (strain LB400).